Consider the following 250-residue polypeptide: AA9 family lytic polysaccharide monooxygenase F (250 aa).

The signal sequence occupies residues 1–21 (MAMSKIATLAGLLASAGLVAG). A Cu(2+)-binding site is contributed by His-22. Asp-51 contacts O2. 2 cysteine pairs are disulfide-bonded: Cys-77/Cys-200 and Cys-121/Cys-125. His-107 is a binding site for Cu(2+). O2 is bound by residues His-186 and Gln-195. Tyr-197 is a binding site for Cu(2+).

This sequence belongs to the glycosyl hydrolase 61 family. Cu(2+) is required as a cofactor.

It is found in the secreted. It carries out the reaction Endohydrolysis of (1-&gt;4)-beta-D-glucosidic linkages in cellulose, lichenin and cereal beta-D-glucans.. Its function is as follows. Lytic polysaccharide monooxygenase (LMPO) that depolymerizes crystalline and amorphous polysaccharides via the oxidation of scissile alpha- or beta-(1-4)-glycosidic bonds, yielding C1 or C4 oxidation products. Catalysis by LPMOs requires the reduction of the active-site copper from Cu(II) to Cu(I) by a reducing agent and H(2)O(2) or O(2) as a cosubstrate. Major secreted component of the extracellular cellulolytic system. This chain is AA9 family lytic polysaccharide monooxygenase F, found in Emericella nidulans (strain FGSC A4 / ATCC 38163 / CBS 112.46 / NRRL 194 / M139) (Aspergillus nidulans).